Consider the following 245-residue polypeptide: Mitochondrial import inner membrane translocase subunit Tim21 (245 aa).

The transit peptide at methionine 1 to serine 18 directs the protein to the mitochondrion. The segment at phenylalanine 64–serine 97 is disordered. The span at aspartate 70–serine 79 shows a compositional bias: basic and acidic residues. The helical transmembrane segment at threonine 108–phenylalanine 128 threads the bilayer.

It belongs to the TIM21 family. As to quaternary structure, component of the TIM23 complex. Component of the MITRAC (mitochondrial translation regulation assembly intermediate of cytochrome c oxidase complex) complex, the core components of this complex being COA3/MITRAC12 and COX14. Interacts with COA3 and MT-CO1/COX1.

The protein localises to the mitochondrion membrane. In terms of biological role, participates in the translocation of transit peptide-containing proteins across the mitochondrial inner membrane. Also required for assembly of mitochondrial respiratory chain complex I and complex IV as component of the MITRAC (mitochondrial translation regulation assembly intermediate of cytochrome c oxidase complex) complex. Probably shuttles between the presequence translocase and respiratory-chain assembly intermediates in a process that promotes incorporation of early nuclear-encoded subunits into these complexes. The sequence is that of Mitochondrial import inner membrane translocase subunit Tim21 (Timm21) from Rattus norvegicus (Rat).